The primary structure comprises 321 residues: Basic endochitinase A (321 aa).

An N-terminal signal peptide occupies residues 1–19 (MGAFALFAVLAMAVTMAVA). One can recognise a Chitin-binding type-1 domain in the interval 20-60 (EQCGSQAGGATCPNCLCCSRFGWCGSTSDYCGDGCQSQCAG). 5 disulfide bridges follow: cysteine 22-cysteine 37, cysteine 31-cysteine 43, cysteine 34-cysteine 61, cysteine 36-cysteine 50, and cysteine 54-cysteine 58. The segment at 62-79 (GGGGTPVTPTPTPSGGGG) is hinge region (Gly/Pro/Thr-rich). Residues 80–321 (VSSIVSRALF…LDCYNQRPFA (242 aa)) are catalytic. Disulfide bonds link cysteine 101–cysteine 163, cysteine 175–cysteine 183, and cysteine 301–cysteine 314. The active-site Proton donor is glutamate 145.

Belongs to the glycosyl hydrolase 19 family. Chitinase class I subfamily. In terms of tissue distribution, localized in the aleurone cells of the seed endosperm (at protein level).

It catalyses the reaction Random endo-hydrolysis of N-acetyl-beta-D-glucosaminide (1-&gt;4)-beta-linkages in chitin and chitodextrins.. In terms of biological role, defense against chitin-containing fungal pathogens. Binds the hyphal tips, lateral walls and septa of fungi and degrades mature chitin. This chain is Basic endochitinase A, found in Secale cereale (Rye).